The primary structure comprises 164 residues: Cyanate hydratase (164 aa).

Residues Arg-104, Glu-107, and Ser-130 contribute to the active site.

The protein belongs to the cyanase family.

The catalysed reaction is cyanate + hydrogencarbonate + 3 H(+) = NH4(+) + 2 CO2. Catalyzes the reaction of cyanate with bicarbonate to produce ammonia and carbon dioxide. This is Cyanate hydratase from Botryotinia fuckeliana (strain B05.10) (Noble rot fungus).